Reading from the N-terminus, the 693-residue chain is Polyribonucleotide nucleotidyltransferase (693 aa).

Residues aspartate 489 and aspartate 495 each coordinate Mg(2+). A KH domain is found at 556–615 (PQIHVMNINPAKIKDVVGRGGATVKGIVEKTGAQIDTSDSGEVKVFAKDKKSMDMAVAMI). The 69-residue stretch at 625 to 693 (GQVYKGKIVK…GRVKLSLVAR (69 aa)) folds into the S1 motif domain.

The protein belongs to the polyribonucleotide nucleotidyltransferase family. As to quaternary structure, component of the RNA degradosome, which is a multiprotein complex involved in RNA processing and mRNA degradation. Requires Mg(2+) as cofactor.

It localises to the cytoplasm. The enzyme catalyses RNA(n+1) + phosphate = RNA(n) + a ribonucleoside 5'-diphosphate. In terms of biological role, involved in mRNA degradation. Catalyzes the phosphorolysis of single-stranded polyribonucleotides processively in the 3'- to 5'-direction. The polypeptide is Polyribonucleotide nucleotidyltransferase (Francisella tularensis subsp. novicida (strain U112)).